Consider the following 1603-residue polypeptide: DNA polymerase theta (1603 aa).

In terms of domain architecture, Helicase ATP-binding spans 38-208; sequence EARQFEDQHL…WLDGAKVFEA (171 aa). Residue 51-58 coordinates ATP; that stretch reads APTSAGKS. Residues 149-152 carry the DEAH box motif; sequence DEMH. Residues 283–434 enclose the Helicase C-terminal domain; it reads TDSSLLEILK…GVLTRKRDAE (152 aa).

It belongs to the DNA polymerase type-A family.

Its subcellular location is the nucleus. The enzyme catalyses DNA(n) + a 2'-deoxyribonucleoside 5'-triphosphate = DNA(n+1) + diphosphate. In terms of biological role, DNA polymerase that promotes microhomology-mediated end-joining (MMEJ), an alternative non-homologous end-joining (NHEJ) machinery triggered in response to double-strand breaks in DNA. MMEJ is an error-prone repair pathway that produces deletions of sequences from the strand being repaired and promotes genomic rearrangements, such as telomere fusions. Required to prevent extensive loss of sequences near G-quadruplex (G4) DNA sites, which are prone to cause genome alterations, by generating deletions. The chain is DNA polymerase theta from Caenorhabditis elegans.